The primary structure comprises 237 residues: Phosphoribosylaminoimidazole-succinocarboxamide synthase (237 aa).

It belongs to the SAICAR synthetase family.

It carries out the reaction 5-amino-1-(5-phospho-D-ribosyl)imidazole-4-carboxylate + L-aspartate + ATP = (2S)-2-[5-amino-1-(5-phospho-beta-D-ribosyl)imidazole-4-carboxamido]succinate + ADP + phosphate + 2 H(+). The protein operates within purine metabolism; IMP biosynthesis via de novo pathway; 5-amino-1-(5-phospho-D-ribosyl)imidazole-4-carboxamide from 5-amino-1-(5-phospho-D-ribosyl)imidazole-4-carboxylate: step 1/2. The chain is Phosphoribosylaminoimidazole-succinocarboxamide synthase from Fusobacterium nucleatum subsp. nucleatum (strain ATCC 25586 / DSM 15643 / BCRC 10681 / CIP 101130 / JCM 8532 / KCTC 2640 / LMG 13131 / VPI 4355).